Here is a 1189-residue protein sequence, read N- to C-terminus: MEENNQNQCIPYNCLSNPEEVLLDGERISTGNSSIDISLSLVQFLVSNFVPGGGFLVGLIDFVWGIVGPSQWDAFLVQIEQLINERIAEFARNAAIANLEGLGNNFNIYVEAFKEWEEDPNNPETRTRVIDRFRILDGLLERDIPSFRISGFEVPLLSVYAQAANLHLAILRDSVIFGERWGLTTINVNENYNRLIRHIDEYADHCANTYNRGLNNLPKSTYQDWITYNRLRRDLTLTVLDIAAFFPNYDNRRYPIQPVGQLTREVYTDPLINFNPQLQSVAQLPTFNVMESSRIRNPHLFDILNNLTIFTDWFSVGRNFYWGGHRVISSLIGGGNITSPIYGREANQEPPRSFTFNGPVFRTLSNPTLRLLQQPWPAPPFNLRGVEGVEFSTPTNSFTYRGRGTVDSLTELPPEDNSVPPREGYSHRLCHATFVQRSGTPFLTTGVVFSWTDRSATLTNTIDPERINQIPLVKGFRVWGGTSVITGPGFTGGDILRRNTFGDFVSLQVNINSPITQRYRLRFRYASSRDARVIVLTGAASTGVGGQVSVNMPLQKTMEIGENLTSRTFRYTDFSNPFSFRANPDIIGISEQPLFGAGSISSGELYIDKIEIILADATFEAESDLERAQKAVNALFTSSNQIGLKTDVTDYHIDQVSNLVDCLSDEFCLDEKRELSEKVKHAKRLSDERNLLQDPNFRGINRQPDRGWRGSTDITIQGGDDVFKENYVTLPGTVDECYPTYLYQKIDESKLKAYTRYELRGYIEDSQDLEIYLIRYNAKHEIVNVPGTGSLWPLSAQSPIGKCGEPNRCAPHLEWNPDLDCSCRDGEKCAHHSHHFTLDIDVGCTDLNEDLGVWVIFKIKTQDGHARLGNLEFLEEKPLLGEALARVKRAEKKWRDKREKLQLETNIVYKEAKESVDALFVNSQYDRLQVDTNIAMIHAADKRVHRIREAYLPELSVIPGVNAAIFEELEGRIFTAYSLYDARNVIKNGDFNNGLLCWNVKGHVDVEEQNNHRSVLVIPEWEAEVSQEVRVCPGRGYILRVTAYKEGYGEGCVTIHEIEDNTDELKFSNCVEEEVYPNNTVTCNNYTGTQEEYEGTYTSRNQGYDEAYGNNPSVPADYASVYEEKSYTDGRRENPCESNRGYGDYTPLPAGYVTKDLEYFPETDKVWIEIGETEGTFIVDSVELLLMEE.

It belongs to the delta endotoxin family.

Promotes colloidosmotic lysis by binding to the midgut epithelial cells of many lepidopteran larvae including Spodoptera species. The protein is Pesticidal crystal protein Cry1Ca (cry1Ca) of Bacillus thuringiensis subsp. entomocidus.